The following is a 161-amino-acid chain: Nucleotide-binding protein Bphy_0527 (161 aa).

It belongs to the YajQ family.

In terms of biological role, nucleotide-binding protein. The polypeptide is Nucleotide-binding protein Bphy_0527 (Paraburkholderia phymatum (strain DSM 17167 / CIP 108236 / LMG 21445 / STM815) (Burkholderia phymatum)).